The primary structure comprises 478 residues: Putative sulfate transporter YbaR (478 aa).

12 helical membrane-spanning segments follow: residues 19–39, 42–62, 65–85, 87–107, 121–141, 143–163, 168–188, 220–240, 259–279, 295–315, 345–365, and 366–386; these read ILAG…FSII, VDPM…SIFG, PGMI…LVAD, GLQY…ILGI, VMIG…LPQF, GASW…YVLP, AVPS…TFHV, IIFP…LLTA, GQGI…CAMI, SAFV…HVVV, APLT…VTDD, and LSKG…AKIS. The region spanning 389–478 is the STAS domain; the sequence is KIVSHAEDQK…ASKSLMKQMA (90 aa).

It belongs to the SLC26A/SulP transporter (TC 2.A.53) family.

The protein localises to the cell membrane. In Bacillus subtilis (strain 168), this protein is Putative sulfate transporter YbaR (ybaR).